A 293-amino-acid polypeptide reads, in one-letter code: uncharacterized protein (293 aa).

The segment at 1–22 (MTFNEGVQIDTSTTSTSGSGGG) is disordered. The helical transmembrane segment at 25 to 45 (LAIGGGLGGLLVVVVAMLLGV) threads the bilayer. Positions 243–265 (GDDRIQQQTTGRTNPETWTHGSA) are disordered. A compositionally biased stretch (polar residues) spans 248–265 (QQQTTGRTNPETWTHGSA).

It is found in the membrane. This is an uncharacterized protein from Mycobacterium tuberculosis (strain CDC 1551 / Oshkosh).